A 92-amino-acid polypeptide reads, in one-letter code: Alpha-elapitoxin-As2a (92 aa).

An N-terminal signal peptide occupies residues 1–21 (MKTLLLTLVVVTIVCLDLGDG). 5 disulfides stabilise this stretch: cysteine 24–cysteine 41, cysteine 34–cysteine 62, cysteine 47–cysteine 51, cysteine 66–cysteine 77, and cysteine 78–cysteine 83.

The protein belongs to the three-finger toxin family. Long-chain subfamily. Type II alpha-neurotoxin sub-subfamily. In terms of tissue distribution, expressed by the venom gland.

The protein resides in the secreted. Its function is as follows. Binds with high affinity to muscular (alpha-1/CHRNA1) and neuronal (alpha-7/CHRNA7) nicotinic acetylcholine receptor (nAChR) and inhibits acetylcholine from binding to the receptor, thereby impairing neuromuscular and neuronal transmission. The sequence is that of Alpha-elapitoxin-As2a from Austrelaps superbus (Lowland copperhead snake).